A 79-amino-acid chain; its full sequence is Cell division protein ZapB (79 aa).

A coiled-coil region spans residues 3–79 (LEVFEKLEAK…QALLGRMEEV (77 aa)). Residues 36–45 (SLTQEVQSAQ) show a composition bias toward polar residues. Residues 36–63 (SLTQEVQSAQHQREELERENNSLKEQQS) form a disordered region. Residues 46–57 (HQREELERENNS) are compositionally biased toward basic and acidic residues.

This sequence belongs to the ZapB family. In terms of assembly, homodimer. The ends of the coiled-coil dimer bind to each other, forming polymers. Interacts with FtsZ.

It is found in the cytoplasm. In terms of biological role, non-essential, abundant cell division factor that is required for proper Z-ring formation. It is recruited early to the divisome by direct interaction with FtsZ, stimulating Z-ring assembly and thereby promoting cell division earlier in the cell cycle. Its recruitment to the Z-ring requires functional FtsA or ZipA. This Salmonella agona (strain SL483) protein is Cell division protein ZapB.